A 697-amino-acid chain; its full sequence is ATP-dependent zinc metalloprotease FtsH (697 aa).

A disordered region spans residues 1-23; that stretch reads MSQNERDSLELERKNTPPDGPRL. Over 1 to 29 the chain is Cytoplasmic; sequence MSQNERDSLELERKNTPPDGPRLPERRPR. A helical transmembrane segment spans residues 30 to 50; the sequence is FSVWIYLAIFLALLVHFFLFW. The Periplasmic segment spans residues 51–158; sequence TGTDTSTIEY…QFTARIEENW (108 aa). The helical transmembrane segment at 159-179 threads the bilayer; the sequence is FGGLLTWIFPLILIVALWVFL. Topologically, residues 180-697 are cytoplasmic; that stretch reads LRRMSPSSQV…TERPESSSAP (518 aa). Residue 251 to 258 participates in ATP binding; it reads GPPGTGKT. H474 contributes to the Zn(2+) binding site. E475 is a catalytic residue. 2 residues coordinate Zn(2+): H478 and D550. The interval 649 to 697 is disordered; it reads GPRPYGDYPSPNGKDVEELKDLQKGEPTSSSAVEAPAPQTERPESSSAP. Positions 662-672 are enriched in basic and acidic residues; the sequence is KDVEELKDLQK.

This sequence in the central section; belongs to the AAA ATPase family. It in the C-terminal section; belongs to the peptidase M41 family. As to quaternary structure, homohexamer. It depends on Zn(2+) as a cofactor.

It is found in the cell inner membrane. Acts as a processive, ATP-dependent zinc metallopeptidase for both cytoplasmic and membrane proteins. Plays a role in the quality control of integral membrane proteins. The polypeptide is ATP-dependent zinc metalloprotease FtsH (Rhodothermus marinus (strain ATCC 43812 / DSM 4252 / R-10) (Rhodothermus obamensis)).